Reading from the N-terminus, the 75-residue chain is Lysis protein (75 aa).

Positions 1 to 16 are enriched in polar residues; the sequence is METRFPQQSQQTPAST. Positions 1–29 are disordered; sequence METRFPQQSQQTPASTNRRRPFKHEDYPC. The chain crosses the membrane as a helical span at residues 38 to 60; the sequence is LYVLIFLAIFLSKFTNQLLLSLL.

It belongs to the Leviviricetes lysis protein family.

It is found in the host cell inner membrane. It localises to the host cell outer membrane. In terms of biological role, induces the formation of specific membrane adhesion sites between the inner and outer membranes, apparently leading to host cell lysis. Lysis may be performed via activation of host murein hydrolases. This is Lysis protein from Escherichia phage MS2 (Bacteriophage MS2).